The primary structure comprises 66 residues: Photosystem II reaction center protein J (66 aa).

Residues 37–57 (LWLVATAGGMAVIFVVGLFFY) traverse the membrane as a helical segment.

The protein belongs to the PsbJ family. In terms of assembly, PSII is composed of 1 copy each of membrane proteins PsbA, PsbB, PsbC, PsbD, PsbE, PsbF, PsbH, PsbI, PsbJ, PsbK, PsbL, PsbM, PsbT, PsbX, PsbY, PsbZ, Psb30/Ycf12, peripheral proteins PsbO, CyanoQ (PsbQ), PsbU, PsbV and a large number of cofactors. It forms dimeric complexes.

It is found in the cellular thylakoid membrane. One of the components of the core complex of photosystem II (PSII). PSII is a light-driven water:plastoquinone oxidoreductase that uses light energy to abstract electrons from H(2)O, generating O(2) and a proton gradient subsequently used for ATP formation. It consists of a core antenna complex that captures photons, and an electron transfer chain that converts photonic excitation into a charge separation. This Synechococcus sp. (strain CC9311) protein is Photosystem II reaction center protein J.